Consider the following 207-residue polypeptide: Chloramphenicol acetyltransferase (207 aa).

Catalysis depends on His-186, which acts as the Proton acceptor.

This sequence belongs to the chloramphenicol acetyltransferase family. As to quaternary structure, homotrimer.

The catalysed reaction is chloramphenicol + acetyl-CoA = chloramphenicol 3-acetate + CoA. In terms of biological role, this enzyme is an effector of chloramphenicol resistance in bacteria. This is Chloramphenicol acetyltransferase (catP) from Clostridium perfringens.